We begin with the raw amino-acid sequence, 155 residues long: Endoribonuclease YbeY (155 aa).

The Zn(2+) site is built by His118, His122, and His128.

It belongs to the endoribonuclease YbeY family. Zn(2+) is required as a cofactor.

It localises to the cytoplasm. Its function is as follows. Single strand-specific metallo-endoribonuclease involved in late-stage 70S ribosome quality control and in maturation of the 3' terminus of the 16S rRNA. This is Endoribonuclease YbeY from Bordetella petrii (strain ATCC BAA-461 / DSM 12804 / CCUG 43448).